Consider the following 312-residue polypeptide: Cytochrome f (312 aa).

Positions 1–28 (MQISKFFKFVFISVSLCGSLLFPQMANA) are cleaved as a signal peptide. Residues Tyr-29, Cys-49, Cys-52, and His-53 each contribute to the heme site. A helical membrane pass occupies residues 278-298 (VKGMIAFFFTVTVAQILLVLK).

The protein belongs to the cytochrome f family. In terms of assembly, the 4 large subunits of the cytochrome b6-f complex are cytochrome b6, subunit IV (17 kDa polypeptide, petD), cytochrome f and the Rieske protein, while the 4 small subunits are PetG, PetL, PetM and PetN. The complex functions as a dimer. The cofactor is heme.

The protein localises to the plastid. Its subcellular location is the chloroplast thylakoid membrane. Component of the cytochrome b6-f complex, which mediates electron transfer between photosystem II (PSII) and photosystem I (PSI), cyclic electron flow around PSI, and state transitions. The sequence is that of Cytochrome f from Emiliania huxleyi (Coccolithophore).